The following is a 163-amino-acid chain: tRNA-acetylating toxin 2 (163 aa).

Tyr137 is an active-site residue.

The protein belongs to the acetyltransferase family. GNAT subfamily. Homodimer. Forms a complex with cognate antitoxin TacA2.

The catalysed reaction is glycyl-tRNA(Gly) + acetyl-CoA = N-acetylglycyl-tRNA(Gly) + CoA + H(+). It carries out the reaction L-isoleucyl-tRNA(Ile) + acetyl-CoA = N-acetyl-L-isoleucyl-tRNA(Ile) + CoA + H(+). The enzyme catalyses L-leucyl-tRNA(Leu) + acetyl-CoA = N-acetyl-L-leucyl-tRNA(Leu) + CoA + H(+). Toxic component of a type II toxin-antitoxin (TA) system. Acetylates tRNA and inhibits translation. Acetylates mainly Gly and Ile/Leu in vitro. Overexpression during the lag phase of a tacA2-tacT2 deletion strain leads to a 100-fold increase in persister cells in the presence of cefotaxime and a non-growth state in the absence of antibiotic. This protein, which has a single amino acid compared to S.typhimurium strain 14028s (Lys-29 is Glu in 14028s), produces 100-fold more persister cells, has much higher acetylation activity and binds tRNA much better. Persister cell formation and the growth defect are neutralized by cognate antitoxin TacA2. Its function is as follows. The TacA2-TacT2 complex both represses and derepresses expression of its own operon. The sequence is that of tRNA-acetylating toxin 2 from Salmonella enteritidis.